A 711-amino-acid chain; its full sequence is Polyribonucleotide nucleotidyltransferase (711 aa).

Mg(2+)-binding residues include D489 and D495. The region spanning 556 to 615 is the KH domain; it reads PRIHTIKISPDKIKDVIGKGGSVIRALTEETGTTIEIEDDGTVKIAATDGEKAKHAIRRI. One can recognise an S1 motif domain in the interval 625–693; the sequence is GRIYNGKVTR…RQGRVRLSIK (69 aa).

The protein belongs to the polyribonucleotide nucleotidyltransferase family. Component of the RNA degradosome, which is a multiprotein complex involved in RNA processing and mRNA degradation. Mg(2+) is required as a cofactor.

It is found in the cytoplasm. It catalyses the reaction RNA(n+1) + phosphate = RNA(n) + a ribonucleoside 5'-diphosphate. In terms of biological role, involved in mRNA degradation. Catalyzes the phosphorolysis of single-stranded polyribonucleotides processively in the 3'- to 5'-direction. This is Polyribonucleotide nucleotidyltransferase from Cronobacter sakazakii (strain ATCC BAA-894) (Enterobacter sakazakii).